Here is a 312-residue protein sequence, read N- to C-terminus: Methionyl-tRNA formyltransferase (312 aa).

The segment at 34–54 is disordered; sequence PDAASGRRGKPQPSPVAREAA. Position 110–113 (110–113) interacts with (6S)-5,6,7,8-tetrahydrofolate; sequence SLLP.

This sequence belongs to the Fmt family.

It catalyses the reaction L-methionyl-tRNA(fMet) + (6R)-10-formyltetrahydrofolate = N-formyl-L-methionyl-tRNA(fMet) + (6S)-5,6,7,8-tetrahydrofolate + H(+). In terms of biological role, attaches a formyl group to the free amino group of methionyl-tRNA(fMet). The formyl group appears to play a dual role in the initiator identity of N-formylmethionyl-tRNA by promoting its recognition by IF2 and preventing the misappropriation of this tRNA by the elongation apparatus. This Mycobacterium tuberculosis (strain ATCC 25177 / H37Ra) protein is Methionyl-tRNA formyltransferase.